The primary structure comprises 352 residues: Histidinol-phosphate aminotransferase (352 aa).

N6-(pyridoxal phosphate)lysine is present on Lys-221.

Belongs to the class-II pyridoxal-phosphate-dependent aminotransferase family. Histidinol-phosphate aminotransferase subfamily. As to quaternary structure, homodimer. The cofactor is pyridoxal 5'-phosphate.

The enzyme catalyses L-histidinol phosphate + 2-oxoglutarate = 3-(imidazol-4-yl)-2-oxopropyl phosphate + L-glutamate. It participates in amino-acid biosynthesis; L-histidine biosynthesis; L-histidine from 5-phospho-alpha-D-ribose 1-diphosphate: step 7/9. This chain is Histidinol-phosphate aminotransferase, found in Staphylococcus aureus (strain MSSA476).